Consider the following 282-residue polypeptide: NADPH-dependent 7-cyano-7-deazaguanine reductase (282 aa).

88–90 serves as a coordination point for substrate; that stretch reads IES. 90–91 provides a ligand contact to NADPH; the sequence is SK. Cys-190 acts as the Thioimide intermediate in catalysis. The active-site Proton donor is Asp-197. Position 229–230 (229–230) interacts with substrate; that stretch reads HE. 258 to 259 is a binding site for NADPH; sequence RG.

It belongs to the GTP cyclohydrolase I family. QueF type 2 subfamily. In terms of assembly, homodimer.

The protein localises to the cytoplasm. The enzyme catalyses 7-aminomethyl-7-carbaguanine + 2 NADP(+) = 7-cyano-7-deazaguanine + 2 NADPH + 3 H(+). It participates in tRNA modification; tRNA-queuosine biosynthesis. In terms of biological role, catalyzes the NADPH-dependent reduction of 7-cyano-7-deazaguanine (preQ0) to 7-aminomethyl-7-deazaguanine (preQ1). This is NADPH-dependent 7-cyano-7-deazaguanine reductase from Salmonella paratyphi C (strain RKS4594).